The chain runs to 937 residues: Periplasmic nitrate reductase (937 aa).

Positions Met-1–Ala-42 form a signal peptide, tat-type signal. Residues Trp-49 to Asp-110 enclose the 4Fe-4S Mo/W bis-MGD-type domain. The [4Fe-4S] cluster site is built by Cys-56, Cys-59, Cys-63, and Cys-96. Residues Lys-98, Gln-166, Asn-191, Cys-195, Trp-228 to Met-235, Met-433, Gln-437, Asn-543, Ser-568 to Glu-569, Lys-591, Asp-618, and Thr-827 to Ser-836 each bind Mo-bis(molybdopterin guanine dinucleotide). Trp-903 contributes to the substrate binding site. Mo-bis(molybdopterin guanine dinucleotide) is bound by residues Asn-911 and Lys-928.

The protein belongs to the prokaryotic molybdopterin-containing oxidoreductase family. NasA/NapA/NarB subfamily. In terms of assembly, component of the periplasmic nitrate reductase NapAB complex composed of NapA and NapB. Requires [4Fe-4S] cluster as cofactor. It depends on Mo-bis(molybdopterin guanine dinucleotide) as a cofactor. Post-translationally, predicted to be exported by the Tat system. The position of the signal peptide cleavage has not been experimentally proven.

It localises to the periplasm. It carries out the reaction 2 Fe(II)-[cytochrome] + nitrate + 2 H(+) = 2 Fe(III)-[cytochrome] + nitrite + H2O. Its function is as follows. Catalytic subunit of the periplasmic nitrate reductase complex NapAB. Receives electrons from NapB and catalyzes the reduction of nitrate to nitrite. The protein is Periplasmic nitrate reductase of Helicobacter hepaticus (strain ATCC 51449 / 3B1).